We begin with the raw amino-acid sequence, 203 residues long: Small ribosomal subunit protein uS4c (203 aa).

Residues 92–150 (MRLDNIIYRLGMAPTIANARQLVNHGHIVVNDRIVTIPSYRCKPKDIISVRNNSTSRNV) form the S4 RNA-binding domain.

The protein belongs to the universal ribosomal protein uS4 family. Part of the 30S ribosomal subunit. Contacts protein S5. The interaction surface between S4 and S5 is involved in control of translational fidelity.

It localises to the plastid. The protein resides in the chloroplast. One of the primary rRNA binding proteins, it binds directly to 16S rRNA where it nucleates assembly of the body of the 30S subunit. Its function is as follows. With S5 and S12 plays an important role in translational accuracy. This Chlorokybus atmophyticus (Soil alga) protein is Small ribosomal subunit protein uS4c (rps4).